A 420-amino-acid chain; its full sequence is 3-isopropylmalate dehydratase large subunit (420 aa).

3 residues coordinate [4Fe-4S] cluster: Cys300, Cys360, and Cys363.

It belongs to the aconitase/IPM isomerase family. LeuC type 2 subfamily. Heterodimer of LeuC and LeuD. It depends on [4Fe-4S] cluster as a cofactor.

The catalysed reaction is (2R,3S)-3-isopropylmalate = (2S)-2-isopropylmalate. Its pathway is amino-acid biosynthesis; L-leucine biosynthesis; L-leucine from 3-methyl-2-oxobutanoate: step 2/4. Catalyzes the isomerization between 2-isopropylmalate and 3-isopropylmalate, via the formation of 2-isopropylmaleate. This is 3-isopropylmalate dehydratase large subunit from Heliobacterium modesticaldum (strain ATCC 51547 / Ice1).